A 525-amino-acid polypeptide reads, in one-letter code: Beta-1,4-xylosyltransferase IRX14 (525 aa).

Residues 1 to 35 lie on the Cytoplasmic side of the membrane; sequence MKLSALHQSYLNRRSNSFRSPTSLDSSVDGSGKSL. Residues 36 to 56 form a helical; Signal-anchor for type II membrane protein membrane-spanning segment; that stretch reads IAVFWLILHCLCCLISLVLGF. Topologically, residues 57–525 are lumenal; sequence RFSRLVFFFL…SSSSKHQERN (469 aa). 3 N-linked (GlcNAc...) asparagine glycosylation sites follow: asparagine 102, asparagine 204, and asparagine 326. The segment at 452-525 is disordered; sequence RTPWPDVPPE…SSSSKHQERN (74 aa). The segment covering 471 to 488 has biased composition (polar residues); it reads PLSQGNTVVVIPKQQQHP. A compositionally biased stretch (basic residues) spans 489 to 503; that stretch reads TKIRKPKRKSKKSKH. The segment covering 508 to 519 has biased composition (polar residues); it reads TDTTTQVYSSSS.

It belongs to the glycosyltransferase 43 family. As to expression, expressed in developing interfascicular fibers and xylem cells in stems and developing secondary xylem in roots.

Its subcellular location is the golgi apparatus membrane. The catalysed reaction is [(1-&gt;4)-beta-D-xylan](n) + UDP-alpha-D-xylose = [(1-&gt;4)-beta-D-xylan](n+1) + UDP + H(+). Its function is as follows. Involved in the synthesis of the hemicellulose glucuronoxylan, a major component of secondary cell walls. Involved in the elongation of glucuronoxylan xylosyl backbone. Xylan xylosyltransferase that acts cooperatively with IRX9 to achieve the successive addition of xylosyl residues during xylan backbone elongation. Required for the proper composition and structural properties of released seed coat mucilage. Required for the production of highly branched xylan polymers in seed coat mucilage. Xylan with xylose side chains seems to be necessary for pectin attachment to the seed surface. Together with MUCI70, required for xylan and pectin synthesis in seed coat epidermal (SCE) cells. The sequence is that of Beta-1,4-xylosyltransferase IRX14 from Arabidopsis thaliana (Mouse-ear cress).